A 679-amino-acid polypeptide reads, in one-letter code: Probable metal-nicotianamine transporter YSL18 (679 aa).

Positions Met-1–Phe-17 are enriched in basic and acidic residues. Positions Met-1 to Pro-21 are disordered. 14 helical membrane passes run Val-29–Met-49, Leu-51–Phe-71, Cys-101–Met-121, Phe-144–Pro-164, Leu-211–Phe-231, Val-255–Ile-275, Val-309–Leu-329, Phe-379–Tyr-399, Val-407–Val-427, Ile-441–Ile-461, Val-497–Phe-517, Leu-547–Ala-567, Phe-593–Trp-613, and Val-627–Ala-647.

It belongs to the YSL (TC 2.A.67.2) family.

Its subcellular location is the membrane. May be involved in the transport of nicotianamine-chelated metals. In Oryza sativa subsp. japonica (Rice), this protein is Probable metal-nicotianamine transporter YSL18 (YSL18).